The primary structure comprises 256 residues: Enolase-phosphatase E1 (256 aa).

Mg(2+) contacts are provided by D14 and E16. Residues 142-143 (SS) and K176 each bind substrate. D201 contacts Mg(2+).

This sequence belongs to the HAD-like hydrolase superfamily. MasA/MtnC family. As to quaternary structure, monomer. Mg(2+) serves as cofactor.

Its subcellular location is the cytoplasm. The protein resides in the nucleus. It carries out the reaction 5-methylsulfanyl-2,3-dioxopentyl phosphate + H2O = 1,2-dihydroxy-5-(methylsulfanyl)pent-1-en-3-one + phosphate. It participates in amino-acid biosynthesis; L-methionine biosynthesis via salvage pathway; L-methionine from S-methyl-5-thio-alpha-D-ribose 1-phosphate: step 3/6. The protein operates within amino-acid biosynthesis; L-methionine biosynthesis via salvage pathway; L-methionine from S-methyl-5-thio-alpha-D-ribose 1-phosphate: step 4/6. In terms of biological role, bifunctional enzyme that catalyzes the enolization of 2,3-diketo-5-methylthiopentyl-1-phosphate (DK-MTP-1-P) into the intermediate 2-hydroxy-3-keto-5-methylthiopentenyl-1-phosphate (HK-MTPenyl-1-P), which is then dephosphorylated to form the acireductone 1,2-dihydroxy-3-keto-5-methylthiopentene (DHK-MTPene). This is Enolase-phosphatase E1 from Drosophila sechellia (Fruit fly).